Here is a 572-residue protein sequence, read N- to C-terminus: Probable serine/threonine-protein kinase At1g54610 (572 aa).

A disordered region spans residues 1–89 (MGCVFGREAA…SNPSKHWRGE (89 aa)). Residues 9–40 (AATTTTAEAKQAKSSKASSGVVVVGESSVTKS) show a composition bias toward low complexity. Residues 47–67 (DVEKKKNEEANGDKERKSSKG) are compositionally biased toward basic and acidic residues. Positions 74–83 (KPNPRLSNPS) are enriched in polar residues. Residues 118–402 (FEKIDKIGQG…ASAALKSEFF (285 aa)) form the Protein kinase domain. Residues 124-132 (IGQGTYSNV) and Lys-147 contribute to the ATP site. The active-site Proton acceptor is the Asp-242. Disordered stretches follow at residues 409–474 (CEPA…NVDR) and 526–572 (SSFN…AVVA). Positions 419 to 434 (PSKEIDAKRRDEETRR) are enriched in basic and acidic residues. The segment covering 554–572 (SRKKKDNTKSSKGKRAVVA) has biased composition (basic residues).

The protein belongs to the protein kinase superfamily. Ser/Thr protein kinase family.

It catalyses the reaction L-seryl-[protein] + ATP = O-phospho-L-seryl-[protein] + ADP + H(+). It carries out the reaction L-threonyl-[protein] + ATP = O-phospho-L-threonyl-[protein] + ADP + H(+). This chain is Probable serine/threonine-protein kinase At1g54610, found in Arabidopsis thaliana (Mouse-ear cress).